Reading from the N-terminus, the 2897-residue chain is Chromodomain-helicase-DNA-binding protein 9 (2897 aa).

Polar residues predominate over residues 173-201 (QCTSLRSQQNRNNLNPGQNSLSQSKNFMN). Disordered regions lie at residues 173 to 265 (QCTS…CSVS), 482 to 525 (QRQP…KQEK), and 537 to 671 (AKER…SAPL). Lysine 197 participates in a covalent cross-link: Glycyl lysine isopeptide (Lys-Gly) (interchain with G-Cter in SUMO2). The segment covering 220-235 (SNSQQSISMQQFSQTS) has biased composition (low complexity). Polar residues-rich tracts occupy residues 247 to 260 (HQEG…PNMT) and 484 to 506 (QPPS…TQVR). Position 499 is an N6-acetyllysine (lysine 499). Positions 508–525 (MSEKKQRKKVESESKQEK) are enriched in basic and acidic residues. Serine 550 bears the Phosphoserine mark. The segment covering 573-593 (KPKDKDSKKTKTCSKLKEKTK) has biased composition (basic and acidic residues). A Glycyl lysine isopeptide (Lys-Gly) (interchain with G-Cter in SUMO2) cross-link involves residue lysine 596. Phosphoserine is present on serine 611. A compositionally biased stretch (basic residues) spans 634 to 644 (RRSNRQIKRKK). The segment covering 645 to 660 (YAEDIEGKQSEEEVKG) has biased composition (basic and acidic residues). 2 consecutive Chromo domains span residues 690–761 (AIVD…HFFA) and 773–839 (VEVD…RLDR). An LXXLL motif 1 motif is present at residues 868-872 (LNWLL). In terms of domain architecture, Helicase ATP-binding spans 872 to 1046 (LFNWYNRRNC…FSLLHFLEPL (175 aa)). 885–892 (DEMGLGKT) is an ATP binding site. The DEAH box motif lies at 997-1000 (DEAH). The short motif at 1036–1040 (LFSLL) is the LXXLL motif 2 element. A Helicase C-terminal domain is found at 1186–1337 (LIDKLLPKMK…KAVLQSMSGR (152 aa)). A disordered region spans residues 1461-1484 (KDELAELSEAESEGDEKPKLRRPC). The span at 1465 to 1474 (AELSEAESEG) shows a compositional bias: acidic residues. A phosphoserine mark is found at serine 1468 and serine 1472. Residues 1475–1484 (DEKPKLRRPC) show a composition bias toward basic and acidic residues. Residues lysine 1588, lysine 1738, and lysine 1903 each participate in a glycyl lysine isopeptide (Lys-Gly) (interchain with G-Cter in SUMO2) cross-link. A Phosphoserine modification is found at serine 2026. The LXXLL motif 3 signature appears at 2031-2035 (LPRLL). Residue lysine 2038 forms a Glycyl lysine isopeptide (Lys-Gly) (interchain with G-Cter in SUMO2) linkage. 2 disordered regions span residues 2050 to 2238 (ENLK…QMNN) and 2305 to 2337 (GAAT…SKVK). A phosphoserine mark is found at serine 2058 and serine 2059. Residue lysine 2074 forms a Glycyl lysine isopeptide (Lys-Gly) (interchain with G-Cter in SUMO2) linkage. 2 positions are modified to phosphoserine: serine 2075 and serine 2079. The span at 2094 to 2104 (SGGKCETDRRM) shows a compositional bias: basic and acidic residues. Positions 2141–2193 (SSCSSRSSSSSSSSSCSHSRSGSSSSSSSSCSSASSSSSSSTSSSSSSSSSSS) are enriched in low complexity. Residues 2203 to 2216 (AQKRESTTHMKAYD) show a composition bias toward basic and acidic residues. The span at 2221-2238 (ASLSTTQDETQDSFQMNN) shows a compositional bias: polar residues. The binds A/T-rich DNA stretch occupies residues 2332–2481 (QMSKVKKHVR…LSYTQPQGIP (150 aa)). Residues lysine 2350, lysine 2356, and lysine 2361 each participate in a glycyl lysine isopeptide (Lys-Gly) (interchain with G-Cter in SUMO2) cross-link. An a.T hook-like region spans residues 2429–2436 (KKRRGRRK). The LXXLL motif 4 motif lies at 2721–2725 (LPNLL). The tract at residues 2729-2777 (GLLTKPTESGTEDKKGSDSKESEGKTERTESQSSENGGENSVSSSPSTS) is disordered. The segment covering 2739–2758 (TEDKKGSDSKESEGKTERTE) has biased composition (basic and acidic residues). Residues 2759 to 2777 (SQSSENGGENSVSSSPSTS) show a composition bias toward low complexity. Positions 2793–2797 (LNPLL) match the LXXLL motif 5 motif. The tract at residues 2827-2897 (VQNKNSDLGS…SEDSDSSNED (71 aa)) is disordered. Residues 2840–2857 (VEVKEEDSRIKDQEDKGG) show a composition bias toward basic and acidic residues. Lysine 2843 participates in a covalent cross-link: Glycyl lysine isopeptide (Lys-Gly) (interchain with G-Cter in SUMO2). Positions 2877–2888 (ASSGSDSTSSSS) are enriched in low complexity.

Belongs to the SNF2/RAD54 helicase family. As to quaternary structure, interacts with PPARA. Probably interacts with ESR1 and NR1I3. Post-translationally, phosphorylated on serine and tyrosine residues. Widely expressed at low levels. In bone marrow, expression is restricted to osteoprogenitor cells adjacent to mature osteoblasts.

It is found in the cytoplasm. It localises to the nucleus. It carries out the reaction ATP + H2O = ADP + phosphate + H(+). In terms of biological role, probable ATP-dependent chromatin-remodeling factor. Acts as a transcriptional coactivator for PPARA and possibly other nuclear receptors. Has DNA-dependent ATPase activity and binds to A/T-rich DNA. Associates with A/T-rich regulatory regions in promoters of genes that participate in the differentiation of progenitors during osteogenesis. In Homo sapiens (Human), this protein is Chromodomain-helicase-DNA-binding protein 9 (CHD9).